The primary structure comprises 239 residues: tRNA (guanine-N(7)-)-methyltransferase (239 aa).

Positions 69, 94, 121, and 144 each coordinate S-adenosyl-L-methionine. Asp144 is an active-site residue. Lys148 provides a ligand contact to substrate. The interaction with RNA stretch occupies residues Arg150–Arg155. Substrate-binding positions include Asp180 and Thr217–Glu220.

It belongs to the class I-like SAM-binding methyltransferase superfamily. TrmB family. As to quaternary structure, monomer.

The catalysed reaction is guanosine(46) in tRNA + S-adenosyl-L-methionine = N(7)-methylguanosine(46) in tRNA + S-adenosyl-L-homocysteine. Its pathway is tRNA modification; N(7)-methylguanine-tRNA biosynthesis. Functionally, catalyzes the formation of N(7)-methylguanine at position 46 (m7G46) in tRNA. The sequence is that of tRNA (guanine-N(7)-)-methyltransferase from Shigella boydii serotype 4 (strain Sb227).